We begin with the raw amino-acid sequence, 326 residues long: Dehydrogenase/reductase SDR family protein 7-like (326 aa).

At 1–17 (MKVQDMDKCAPSSDWNV) the chain is on the cytoplasmic side. A helical; Signal-anchor for type II membrane protein transmembrane segment spans residues 18-38 (LYWVLGTVLMPVALPLAIINI). The Peroxisomal portion of the chain corresponds to 39-326 (WQRFQAQKFR…KLENAEKKST (288 aa)). 57-81 (LITGASSGLGESLAHVFYRAGCRVI) contacts NAD(+). Ser193 contacts substrate. The Proton acceptor role is filled by Tyr206.

It belongs to the short-chain dehydrogenases/reductases (SDR) family.

The protein localises to the peroxisome membrane. Putative oxidoreductase. The protein is Dehydrogenase/reductase SDR family protein 7-like of Drosophila melanogaster (Fruit fly).